The sequence spans 474 residues: Gamma-aminobutyric acid receptor subunit gamma-2 (474 aa).

The signal sequence occupies residues 1–38; the sequence is MSSPNTWSIGSSVYSPVFSQKMTLWILLLLSLYPGFTS. Over 39–274 the chain is Extracellular; it reads QKSDDDYEDY…FDLSRRMGYF (236 aa). N-linked (GlcNAc...) asparagine glycosylation is found at Asn-51 and Asn-128. Cys-189 and Cys-203 are disulfide-bonded. Asn-246 is a glycosylation site (N-linked (GlcNAc...) asparagine). The helical transmembrane segment at 275–295 threads the bilayer; that stretch reads TIQTYIPCTLIVVLSWVSFWI. Over 296 to 301 the chain is Cytoplasmic; the sequence is NKDAVP. A helical membrane pass occupies residues 302–321; that stretch reads ARTSLGITTVLTMTTLSTIA. At 322–333 the chain is on the extracellular side; the sequence is RKSLPKVSYVTA. The helical transmembrane segment at 334 to 358 threads the bilayer; the sequence is MDLFVSVCFIFVFSALVEYGTLHYF. The Cytoplasmic segment spans residues 359 to 450; that stretch reads VSNRKPSKDK…IHIRIAKMDS (92 aa). Ser-381 carries the post-translational modification Phosphoserine; by PKC. The chain crosses the membrane as a helical span at residues 451-472; it reads YARIFFPTAFCLFNLVYWVSYL. Topologically, residues 473–474 are extracellular; it reads YL.

Belongs to the ligand-gated ion channel (TC 1.A.9) family. Gamma-aminobutyric acid receptor (TC 1.A.9.5) subfamily. GABRG2 sub-subfamily. As to quaternary structure, heteropentamer, formed by a combination of alpha (GABRA1-6), beta (GABRB1-3), gamma (GABRG1-3), delta (GABRD), epsilon (GABRE), rho (GABRR1-3), pi (GABRP) and theta (GABRQ) chains, each subunit exhibiting distinct physiological and pharmacological properties. Interacts with GABARAP. Interacts with KIF21B. Identified in a complex of 720 kDa composed of LHFPL4, NLGN2, GABRA1, GABRB2, GABRG2 and GABRB3. Interacts with LHFPL4. Interacts with SHISA7; interaction leads to the regulation of GABA(A) receptor trafficking, channel deactivation kinetics and pharmacology. Post-translationally, glycosylated. Palmitoylated by ZDHHC3/GODZ; required for the accumulation of GABA(A) receptors at the postsynaptic membrane of inhibitory GABAergic synapses. Expressed in brain neurons (at protein level).

It localises to the postsynaptic cell membrane. Its subcellular location is the cell membrane. It is found in the cell projection. The protein localises to the dendrite. The protein resides in the cytoplasmic vesicle membrane. It carries out the reaction chloride(in) = chloride(out). Allosterically activated by benzodiazepines. Activated by pentobarbital. Inhibited by the antagonist bicuculline. Inhibited by zinc ions. Potentiated by histamine. Its function is as follows. Gamma subunit of the heteropentameric ligand-gated chloride channel gated by gamma-aminobutyric acid (GABA), a major inhibitory neurotransmitter in the brain. GABA-gated chloride channels, also named GABA(A) receptors (GABAAR), consist of five subunits arranged around a central pore and contain GABA active binding site(s) located at the alpha and beta subunit interface(s). When activated by GABA, GABAARs selectively allow the flow of chloride anions across the cell membrane down their electrochemical gradient. Gamma-2/GABRG2-containing GABAARs are found at both synaptic and extrasynaptic sites. Chloride influx into the postsynaptic neuron following GABAAR opening decreases the neuron ability to generate a new action potential, thereby reducing nerve transmission. GABAARs containing alpha-1 and beta-2 or -3 subunits exhibit synaptogenic activity; the gamma-2 subunit being necessary but not sufficient to induce rapid synaptic contacts formation. Extrasynaptic gamma-2-containing receptors contribute to the tonic GABAergic inhibition. GABAARs function also as histamine receptor where histamine binds at the interface of two neighboring beta subunits and potentiates GABA response in a gamma-2 subunit-controlled manner. This Mus musculus (Mouse) protein is Gamma-aminobutyric acid receptor subunit gamma-2.